The chain runs to 173 residues: Shikimate kinase 1 (173 aa).

Residue glycine 14–threonine 19 coordinates ATP. Serine 18 contributes to the Mg(2+) binding site. 3 residues coordinate substrate: aspartate 36, arginine 60, and glycine 82. Arginine 120 provides a ligand contact to ATP. Arginine 140 serves as a coordination point for substrate. Residue glutamine 157 participates in ATP binding.

It belongs to the shikimate kinase family. Monomer. Mg(2+) serves as cofactor.

It localises to the cytoplasm. The catalysed reaction is shikimate + ATP = 3-phosphoshikimate + ADP + H(+). It participates in metabolic intermediate biosynthesis; chorismate biosynthesis; chorismate from D-erythrose 4-phosphate and phosphoenolpyruvate: step 5/7. Catalyzes the specific phosphorylation of the 3-hydroxyl group of shikimic acid using ATP as a cosubstrate. This Citrobacter koseri (strain ATCC BAA-895 / CDC 4225-83 / SGSC4696) protein is Shikimate kinase 1.